The primary structure comprises 290 residues: Virginiamycin B lyase (290 aa).

H226 contributes to the substrate binding site. E265 lines the Mg(2+) pocket. H267 functions as the Proton acceptor in the catalytic mechanism. E282 is a binding site for Mg(2+).

It belongs to the Vgb family. As to quaternary structure, monomer. Mg(2+) is required as a cofactor.

Its function is as follows. Inactivates the type B streptogramin antibiotics by linearizing the lactone ring at the ester linkage, generating a free phenylglycine carboxylate and converting the threonyl moiety into 2-amino-butenoic acid. The polypeptide is Virginiamycin B lyase (Mycolicibacterium vanbaalenii (strain DSM 7251 / JCM 13017 / BCRC 16820 / KCTC 9966 / NRRL B-24157 / PYR-1) (Mycobacterium vanbaalenii)).